A 354-amino-acid chain; its full sequence is Acyl-CoA-binding domain-containing protein 2 (354 aa).

Residues 11-31 (VILGLIFSYLLAKLISIVVTF) traverse the membrane as a helical; Signal-anchor segment. A disordered region spans residues 75-96 (AEQGSSRSDSVAGDDSEEDDDW). Acidic residues predominate over residues 86–96 (AGDDSEEDDDW). Residues 104 to 194 (LDEAFSAATL…VTQLYPTWLD (91 aa)) form the ACB domain. An acyl-CoA-binding positions include 136–140 (YGLYK), K162, and Y181. ANK repeat units lie at residues 265–294 (EGRTPLHWAIDRGHLNIAKVLVDKNADVNA) and 298–327 (EGQTPLHYAVVCDREAIAEFLVKQNANTAA).

It belongs to the ACBP family. As to quaternary structure, interacts (via ankyrin repeats) with HIPP26 and the ethylene-responsive element-binding proteins RAP2-3/EBP and RAP2-12. Interacts with CSE. In terms of tissue distribution, mostly expressed in roots and flowers, and, to a lower extent, in stems, pods and leaves (at protein level).

Its subcellular location is the cell membrane. It localises to the endoplasmic reticulum membrane. The protein resides in the peroxisome membrane. Its function is as follows. Binds medium- and long-chain acyl-CoA esters with very high affinity. Can interact in vitro with palmitoyl-CoA, but not with oleoyl-CoA. Binds to lead ions (Pb). May function as an intracellular carrier of acyl-CoA esters. Required for proper phospholipid and, to a lower extent, galactolipid composition. The sequence is that of Acyl-CoA-binding domain-containing protein 2 (ACBP2) from Arabidopsis thaliana (Mouse-ear cress).